Reading from the N-terminus, the 521-residue chain is Colicin-E1* (521 aa).

Disordered stretches follow at residues N26–H52 and S127–Q163. A compositionally biased stretch (gly residues) spans D30–G42. Residues K133–A145 are compositionally biased toward basic residues. Residues E146–Q163 are compositionally biased toward basic and acidic residues. The next 2 helical transmembrane spans lie at A470–L486 and I493–K509.

Belongs to the channel forming colicin family.

The protein localises to the cell membrane. Its function is as follows. This colicin is a channel-forming colicin. This class of transmembrane toxins depolarize the cytoplasmic membrane, leading to dissipation of cellular energy. Functionally, colicins are polypeptide toxins produced by and active against E.coli and closely related bacteria. The polypeptide is Colicin-E1* (cea) (Shigella sonnei).